The chain runs to 291 residues: Transmembrane protein 41B (291 aa).

The segment at 1-39 (MAKGRVAERSQLGAHHTTPVGDGAAGTRGLAAPGSRDHQ) is disordered. At threonine 18 the chain carries Phosphothreonine. Position 35 is a phosphoserine (serine 35). 6 consecutive transmembrane segments (helical) span residues 52–72 (MSLL…FLVY), 109–129 (FYVQ…TFAI), 147–169 (LALF…LSYL), 197–217 (LINY…FINI), 225–245 (PLKV…FVAI), and 262–282 (SWNS…PAIF). Residues 140–251 (GFLYPFPLAL…FVAIKAGTTL (112 aa)) are VTT domain; required for its function in autophagy.

It belongs to the TMEM41 family. Interacts with VMP1. Interacts with COPA, COPB1, VDAC1 and ERLIN2. Interacts with ATG2A. Interacts with SURF4. As to quaternary structure, (Microbial infection) Interacts with Zika virus NS4A protein and Yellow fever virus NS4B protein.

It localises to the endoplasmic reticulum membrane. Its subcellular location is the endomembrane system. It is found in the cytoplasm. It carries out the reaction a 1,2-diacyl-sn-glycero-3-phospho-L-serine(in) = a 1,2-diacyl-sn-glycero-3-phospho-L-serine(out). The catalysed reaction is cholesterol(in) = cholesterol(out). It catalyses the reaction a 1,2-diacyl-sn-glycero-3-phosphocholine(in) = a 1,2-diacyl-sn-glycero-3-phosphocholine(out). The enzyme catalyses a 1,2-diacyl-sn-glycero-3-phosphoethanolamine(in) = a 1,2-diacyl-sn-glycero-3-phosphoethanolamine(out). Functionally, phospholipid scramblase involved in lipid homeostasis and membrane dynamics processes. Has phospholipid scramblase activity toward cholesterol and phosphatidylserine, as well as phosphatidylethanolamine and phosphatidylcholine. Required for autophagosome formation: participates in early stages of autophagosome biogenesis at the endoplasmic reticulum (ER) membrane by reequilibrating the leaflets of the ER as lipids are extracted by ATG2 (ATG2A or ATG2B) to mediate autophagosome assembly. In addition to autophagy, involved in other processes in which phospholipid scramblase activity is required. Required for normal motor neuron development. (Microbial infection) Critical host factor required for infection by human coronaviruses SARS-CoV-2, HCoV-OC43, HCoV-NL63, and HCoV-229E, as well as all flaviviruses tested such as Zika virus and Yellow fever virus. Required post-entry of the virus to facilitate the ER membrane remodeling necessary to form replication organelles. The protein is Transmembrane protein 41B of Homo sapiens (Human).